We begin with the raw amino-acid sequence, 263 residues long: Protein IQ-DOMAIN 9 (263 aa).

A disordered region spans residues 16–41 (SKQGTEKKKTSAVKPKKGSKKKGTSL). The Nuclear localization signal 1 motif lies at 21 to 28 (EKKKTSAV). Residues 25–38 (TSAVKPKKGSKKKG) show a composition bias toward basic residues. An IQ domain is found at 46-75 (EDWAATRIQTAFKAYKARKSLRRLKGIARA). The segment at 59–78 (AYKARKSLRRLKGIARAKLS) is calmodulin-binding. Positions 107 to 114 (ARRVCMVT) match the Nuclear localization signal 2 motif. The segment at 216-263 (TPKKPKSSKTDSNSPAKRTVSLSSVPAKTPFPGARNTVKPRRLSFPGA) is disordered. The segment covering 226–241 (DSNSPAKRTVSLSSVP) has biased composition (polar residues).

This sequence belongs to the IQD family. As to quaternary structure, binds to multiple calmodulin (CaM) in the presence of Ca(2+) and CaM-like proteins.

It is found in the nucleus. It localises to the nuclear body. In terms of biological role, may be involved in cooperative interactions with calmodulins or calmodulin-like proteins. Recruits calmodulin proteins to microtubules, thus being a potential scaffold in cellular signaling and trafficking. May associate with nucleic acids and regulate gene expression at the transcriptional or post-transcriptional level. The polypeptide is Protein IQ-DOMAIN 9 (Arabidopsis thaliana (Mouse-ear cress)).